A 366-amino-acid polypeptide reads, in one-letter code: Leucine-rich repeat-containing protein 58 (366 aa).

A Phosphoserine modification is found at S19. LRR repeat units lie at residues 40-61 (ALLR…LGGG), 64-86 (HLQL…LTLS), 87-108 (GLRT…PKGL), 116-138 (SLQV…LELR), 139-161 (ALQT…ENLR), 162-184 (SLEC…ANLP), 185-206 (SLNY…LSQL), 208-229 (SLRS…ILNL), and 231-251 (HLEE…RDLT). Residues 337 to 346 (ASHSSTSQSE) show a composition bias toward low complexity. The segment at 337 to 356 (ASHSSTSQSESDSEDEASVA) is disordered.

This chain is Leucine-rich repeat-containing protein 58 (Lrrc58), found in Mus musculus (Mouse).